The chain runs to 552 residues: CTP synthase (552 aa).

The segment at 1–271 (MASAASSKHL…DAFVVRRLGL (271 aa)) is amidoligase domain. Residue S18 coordinates CTP. S18 lines the UTP pocket. Residues 19 to 24 (SLGKGL) and D76 each bind ATP. 2 residues coordinate Mg(2+): D76 and E145. CTP is bound by residues 152–154 (DIE), 192–197 (KTKPTQ), and K228. Residues 192–197 (KTKPTQ) and K228 contribute to the UTP site. The Glutamine amidotransferase type-1 domain maps to 296-546 (TIALVGKYVD…IEAALKYSAG (251 aa)). G359 contacts L-glutamine. The Nucleophile; for glutamine hydrolysis role is filled by C386. Residues 387-390 (LGLQ), E410, and R472 contribute to the L-glutamine site. Catalysis depends on residues H519 and E521.

This sequence belongs to the CTP synthase family. As to quaternary structure, homotetramer.

It carries out the reaction UTP + L-glutamine + ATP + H2O = CTP + L-glutamate + ADP + phosphate + 2 H(+). It catalyses the reaction L-glutamine + H2O = L-glutamate + NH4(+). The catalysed reaction is UTP + NH4(+) + ATP = CTP + ADP + phosphate + 2 H(+). It participates in pyrimidine metabolism; CTP biosynthesis via de novo pathway; CTP from UDP: step 2/2. Its activity is regulated as follows. Allosterically activated by GTP, when glutamine is the substrate; GTP has no effect on the reaction when ammonia is the substrate. The allosteric effector GTP functions by stabilizing the protein conformation that binds the tetrahedral intermediate(s) formed during glutamine hydrolysis. Inhibited by the product CTP, via allosteric rather than competitive inhibition. Functionally, catalyzes the ATP-dependent amination of UTP to CTP with either L-glutamine or ammonia as the source of nitrogen. Regulates intracellular CTP levels through interactions with the four ribonucleotide triphosphates. This is CTP synthase from Thermobifida fusca (strain YX).